A 52-amino-acid polypeptide reads, in one-letter code: Alpha-crystallin B chain (52 aa).

The protein belongs to the small heat shock protein (HSP20) family. In terms of assembly, homodimer. Aggregates with homologous proteins, including alpha-A-crystallin and the small heat shock protein HSPB1, to form large heteromeric complexes.

In terms of biological role, may contribute to the transparency and refractive index of the lens. The protein is Alpha-crystallin B chain (CRYAB) of Trachemys scripta elegans (Red-eared slider turtle).